The sequence spans 291 residues: MNRIQQTFQTSSAPFWYAQLELGFCYENSRTIMSHRKHYGPVRVQKMLWPEKTGVCHAIIVHPPAGIAGGDHLTFQIETERQAHAVITTPGAGKWYRTNGKQAFQHIYLNVKDDSILEWMPQETMLFDGALAHSETDIHLEQTASFIGWDMLVLGRQARAENFVQGGYHNQFKLWRKNKLLVADTLYFEGGDRWLSSCLGMNNQAVMASFWAVPPEKFRSSFYLEQHIELIRELIMRMDVPVTLTLLEDVLCARFLGNDVRRCHDAFAAIRAKLRRYWFDLDEEFPRIWKT.

This sequence belongs to the UreD family. As to quaternary structure, ureD, UreF and UreG form a complex that acts as a GTP-hydrolysis-dependent molecular chaperone, activating the urease apoprotein by helping to assemble the nickel containing metallocenter of UreC. The UreE protein probably delivers the nickel.

It localises to the cytoplasm. Functionally, required for maturation of urease via the functional incorporation of the urease nickel metallocenter. The sequence is that of Urease accessory protein UreD from Acinetobacter baumannii (strain SDF).